A 3189-amino-acid chain; its full sequence is Beauvericin nonribosomal cyclodepsipeptide synthetase (3189 aa).

Residues 73-466 (HAMYEISQHV…EQLQSAADDA (394 aa)) are condensation 1. Positions 202–223 (DSLPLTPDSSGGSDSDSPSTLK) are disordered. Over residues 208–220 (PDSSGGSDSDSPS) the composition is skewed to low complexity. The tract at residues 507 to 901 (AESPSDPAVL…GRIDSQVKIR (395 aa)) is adenylation 1. The Carrier 1 domain occupies 1036–1112 (TLETGPEARL…RLQAVMSGDS (77 aa)). Serine 1073 carries the O-(pantetheine 4'-phosphoryl)serine modification. Positions 1136 to 1569 (SYSQGRLWFL…KSLISVLPLT (434 aa)) are condensation 2. Residues 1599–2004 (FRSQVATCPD…GRMDFQFKIR (406 aa)) are adenylation 2. An S-adenosyl-L-methionine-dependent N-methyltransferase region spans residues 2072–2211 (MYNGIDAISP…FPTVEYLTRV (140 aa)). 2 Carrier domains span residues 2557–2631 (CPIS…REGL) and 2654–2728 (APRN…ELGQ). An O-(pantetheine 4'-phosphoryl)serine mark is found at serine 2591 and serine 2688. The condensation 3 stretch occupies residues 2773-3181 (QDVYPATHMQ…AYLMEEVCRL (409 aa)).

Belongs to the NRP synthetase family.

It carries out the reaction 3 (R)-2-hydroxy-3-methylbutanoate + 3 L-phenylalanine + 3 S-adenosyl-L-methionine + 6 ATP = beauvericin + 6 AMP + 3 S-adenosyl-L-homocysteine + 6 diphosphate + 6 H(+). Its function is as follows. Beauvericin nonribosomal cyclodepsipeptide synthetase; part of the gene cluster that mediates the biosynthesis of beauvericin (BEA), a non-ribosomal cyclic hexadepsipeptide that shows antibiotic, antifungal, insecticidal, and cancer cell antiproliferative and antihaptotactic activity. Ketoisovalerate reductase BEA2 catalyzes the NADPH-specific reduction of ketoisovaleric acid to hydroxyisovalerate, a precursor for beauvericin biosynthesis. The nonribosomal cyclodepsipeptide synthetase BEA1 then catalyzes the formation of beauvericin via condensation and cyclization of 3 dipeptidol monomers, each composed of one unit of hydroxyisovalerate and one unit of N-methyl-phenylalanine. The polypeptide is Beauvericin nonribosomal cyclodepsipeptide synthetase (Beas) (Beauveria bassiana (White muscardine disease fungus)).